The primary structure comprises 222 residues: V-type ATP synthase subunit D (222 aa).

Belongs to the V-ATPase D subunit family.

In terms of biological role, produces ATP from ADP in the presence of a proton gradient across the membrane. In Deinococcus geothermalis (strain DSM 11300 / CIP 105573 / AG-3a), this protein is V-type ATP synthase subunit D.